The primary structure comprises 527 residues: MSLQMVTVSNNIALIQPGFSLMNFDGQVFFFGQKGWPKRSCPTGVFHLDVKHNHVKLKPTIFSKDSCYLPPLRYPATCTFKGSLESEKHQYIIHGGKTPNNEVSDKIYVMSIVCKNNKKVTFRCTEKDLVGDVPEARYGHSINVVYSRGKSMGVLFGGRSYMPSTHRTTEKWNSVADCLPCVFLVDFEFGCATSYILPELQDGLSFHVSIAKNDTIYILGGHSLANNIRPANLYRIRVDLPLGSPAVNCTVLPGGISVSSAILTQTNNDEFVIVGGYQLENQKRMICNIISLEDNKIEIREMETPDWTPDIKHSKIWFGSNMGNGTVFLGIPGDNKQVVSEGFYFYMLKCAEDDTNEEQTTFTNSQTSTEDPGDSTPFEDSEEFCFSAEANSFDGDDEFDTYNEDDEEDESETGYWITCCPTCDVDINTWVPFYSTELNKPAMIYCSHGDGHWVHAQCMDLAERTLIHLSAGSNKYYCNEHVEIARALHTPQRVLPLKKPPMKSLRKKGSGKILTPAKKSFLRRLFD.

A disordered region spans residues 357 to 380; it reads EEQTTFTNSQTSTEDPGDSTPFED. Positions 358–370 are enriched in polar residues; it reads EQTTFTNSQTSTE. Positions 371–380 are enriched in acidic residues; the sequence is DPGDSTPFED. Residues 416-484 form a PHD-type; atypical zinc finger; that stretch reads WITCCPTCDV…KYYCNEHVEI (69 aa). Zn(2+) contacts are provided by Cys419, Cys423, Cys446, His452, His455, Cys458, Cys478, and His481.

Belongs to the RAG2 family. As to quaternary structure, component of the RAG complex composed of core components RAG1 and RAG2, and associated component HMGB1 or HMGB2. In terms of tissue distribution, cells of the B- and T-lymphocyte lineages.

The protein resides in the nucleus. In terms of biological role, core component of the RAG complex, a multiprotein complex that mediates the DNA cleavage phase during V(D)J recombination. V(D)J recombination assembles a diverse repertoire of immunoglobulin and T-cell receptor genes in developing B and T-lymphocytes through rearrangement of different V (variable), in some cases D (diversity), and J (joining) gene segments. DNA cleavage by the RAG complex occurs in 2 steps: a first nick is introduced in the top strand immediately upstream of the heptamer, generating a 3'-hydroxyl group that can attack the phosphodiester bond on the opposite strand in a direct transesterification reaction, thereby creating 4 DNA ends: 2 hairpin coding ends and 2 blunt, 5'-phosphorylated ends. The chromatin structure plays an essential role in the V(D)J recombination reactions and the presence of histone H3 trimethylated at 'Lys-4' (H3K4me3) stimulates both the nicking and haipinning steps. The RAG complex also plays a role in pre-B cell allelic exclusion, a process leading to expression of a single immunoglobulin heavy chain allele to enforce clonality and monospecific recognition by the B-cell antigen receptor (BCR) expressed on individual B-lymphocytes. The introduction of DNA breaks by the RAG complex on one immunoglobulin allele induces ATM-dependent repositioning of the other allele to pericentromeric heterochromatin, preventing accessibility to the RAG complex and recombination of the second allele. In the RAG complex, RAG2 is not the catalytic component but is required for all known catalytic activities mediated by RAG1. It probably acts as a sensor of chromatin state that recruits the RAG complex to H3K4me3. The protein is V(D)J recombination-activating protein 2 (RAG2) of Homo sapiens (Human).